The chain runs to 181 residues: Inner membrane-spanning protein YciB (181 aa).

5 consecutive transmembrane segments (helical) span residues 19–39, 50–70, 80–100, 118–138, and 148–168; these read FFDI…QLIA, MHLI…IFHD, IVYA…KPIL, LTWY…YVAF, and FKVF…VVYL.

Belongs to the YciB family.

It localises to the cell inner membrane. Plays a role in cell envelope biogenesis, maintenance of cell envelope integrity and membrane homeostasis. The polypeptide is Inner membrane-spanning protein YciB (Shewanella amazonensis (strain ATCC BAA-1098 / SB2B)).